The following is a 229-amino-acid chain: Large ribosomal subunit protein uL1 (229 aa).

It belongs to the universal ribosomal protein uL1 family. As to quaternary structure, part of the 50S ribosomal subunit.

Binds directly to 23S rRNA. The L1 stalk is quite mobile in the ribosome, and is involved in E site tRNA release. Functionally, protein L1 is also a translational repressor protein, it controls the translation of the L11 operon by binding to its mRNA. This is Large ribosomal subunit protein uL1 from Desulforamulus reducens (strain ATCC BAA-1160 / DSM 100696 / MI-1) (Desulfotomaculum reducens).